A 166-amino-acid polypeptide reads, in one-letter code: ATP synthase subunit b (166 aa).

Residues 15 to 37 (TLYYLLIFAALLLLVKHFAWGPV) form a helical membrane-spanning segment.

Belongs to the ATPase B chain family. As to quaternary structure, F-type ATPases have 2 components, F(1) - the catalytic core - and F(0) - the membrane proton channel. F(1) has five subunits: alpha(3), beta(3), gamma(1), delta(1), epsilon(1). F(0) has three main subunits: a(1), b(2) and c(10-14). The alpha and beta chains form an alternating ring which encloses part of the gamma chain. F(1) is attached to F(0) by a central stalk formed by the gamma and epsilon chains, while a peripheral stalk is formed by the delta and b chains.

It localises to the cell membrane. Functionally, f(1)F(0) ATP synthase produces ATP from ADP in the presence of a proton or sodium gradient. F-type ATPases consist of two structural domains, F(1) containing the extramembraneous catalytic core and F(0) containing the membrane proton channel, linked together by a central stalk and a peripheral stalk. During catalysis, ATP synthesis in the catalytic domain of F(1) is coupled via a rotary mechanism of the central stalk subunits to proton translocation. In terms of biological role, component of the F(0) channel, it forms part of the peripheral stalk, linking F(1) to F(0). In Lactobacillus johnsonii (strain CNCM I-12250 / La1 / NCC 533), this protein is ATP synthase subunit b.